A 504-amino-acid chain; its full sequence is Amidophosphoribosyltransferase (504 aa).

Cysteine 2 serves as the catalytic Nucleophile. The 234-residue stretch at 2–235 (CGIVGIVSQS…PGEAIYVTFE (234 aa)) folds into the Glutamine amidotransferase type-2 domain. Mg(2+)-binding residues include threonine 305, aspartate 367, and aspartate 368.

In the C-terminal section; belongs to the purine/pyrimidine phosphoribosyltransferase family. The cofactor is Mg(2+).

It catalyses the reaction 5-phospho-beta-D-ribosylamine + L-glutamate + diphosphate = 5-phospho-alpha-D-ribose 1-diphosphate + L-glutamine + H2O. It participates in purine metabolism; IMP biosynthesis via de novo pathway; N(1)-(5-phospho-D-ribosyl)glycinamide from 5-phospho-alpha-D-ribose 1-diphosphate: step 1/2. Functionally, catalyzes the formation of phosphoribosylamine from phosphoribosylpyrophosphate (PRPP) and glutamine. In Pasteurella multocida (strain Pm70), this protein is Amidophosphoribosyltransferase.